The primary structure comprises 369 residues: MAPISIRGVKKNYGKTPVVHGVDLDIQSGEFIVILGPSGCGKSTLLRMIAGLEEITGGEIAIDGRVVNQLEPRERGCAMVFQNYALYPHMSVAENIGYALKVAGVSKAERQRRIGEVAKALSLEPFLERRPAALSGGQRQRVAMGRAMIREPKVFLFDEPLSNLDAKLRIAMRAEIRRLHRRLGATSIFVTHDQTEAMTLADRLVVMNGGRVEQVGTPEEVYHHPVSRFVAGFVGTPAMNLLEGTINDEGVFVYDQSRKVALPRERAAPLKGKRVVLGMRAEAARLVAPDAPGALTATADFIEELGASRIVHADFDGLPFAVALTEAVKVKSGDPIGIAIDYDQIHLYAADTGRIIENPVMNNAGAVHA.

The ABC transporter domain maps to 4-234; sequence ISIRGVKKNY…PVSRFVAGFV (231 aa). 36–43 serves as a coordination point for ATP; sequence GPSGCGKS.

It belongs to the ABC transporter superfamily. sn-glycerol-3-phosphate importer (TC 3.A.1.1.3) family. As to quaternary structure, the complex is composed of two ATP-binding proteins (UgpC), two transmembrane proteins (UgpA and UgpE) and a solute-binding protein (UgpB).

Its subcellular location is the cell inner membrane. The catalysed reaction is sn-glycerol 3-phosphate(out) + ATP + H2O = sn-glycerol 3-phosphate(in) + ADP + phosphate + H(+). Its function is as follows. Part of the ABC transporter complex UgpBAEC involved in sn-glycerol-3-phosphate (G3P) import. Responsible for energy coupling to the transport system. This Rhizobium johnstonii (strain DSM 114642 / LMG 32736 / 3841) (Rhizobium leguminosarum bv. viciae) protein is sn-glycerol-3-phosphate import ATP-binding protein UgpC 1.